We begin with the raw amino-acid sequence, 157 residues long: Small ribosomal subunit protein uS7 (157 aa).

It belongs to the universal ribosomal protein uS7 family. As to quaternary structure, part of the 30S ribosomal subunit. Contacts proteins S9 and S11.

Functionally, one of the primary rRNA binding proteins, it binds directly to 16S rRNA where it nucleates assembly of the head domain of the 30S subunit. Is located at the subunit interface close to the decoding center, probably blocks exit of the E-site tRNA. The polypeptide is Small ribosomal subunit protein uS7 (Pseudomonas fluorescens (strain Pf0-1)).